The chain runs to 773 residues: Probable C-mannosyltransferase DPY19L2 (773 aa).

Positions 1–45 (MVGPTRSKLREGSSDRPQSSCTGQARRRWSAATMEPQQERSAPQE) are disordered. The Nuclear portion of the chain corresponds to 1–122 (MVGPTRSKLR…ALQMHRFSHR (122 aa)). Residues 123–143 (TLFGLAIFVGILHWLHLITLF) form a helical membrane-spanning segment. Residues 144-209 (ENDHHFSHLS…INTVKRFHLY (66 aa)) are Perinuclear space-facing. A helical membrane pass occupies residues 210 to 230 (PEVVIAYWYRTIIGIMNLFGI). Residues 231–256 (ETKTCWNVTRMEPLNEVQSCEGLGDP) are Nuclear-facing. Residues 257 to 277 (ACFYIGVIFILNGLMMGLFFI) traverse the membrane as a helical segment. Residues 278-311 (YSTYLSGSQLGGLITVACYFFNHGEATRVMWTPP) lie on the Perinuclear space side of the membrane. A helical membrane pass occupies residues 312-332 (LRESFSYPFLVLQMYILTIIL). Residues 333–358 (RTSTVHKKHYMALCFSNVAFMLPWQF) are Nuclear-facing. The chain crosses the membrane as a helical span at residues 359-379 (AQFILFTQIASLFPMYVVGYI). The Perinuclear space portion of the chain corresponds to 380–386 (EPSKFQK). Residues 387–407 (IIYVNMSSVALCFILMFGNSM) form a helical membrane-spanning segment. Over 408–437 (YLSSYYSSCLLVTWAIMQKKSKIQKLGGTE) the chain is Nuclear. Residues 438–458 (LQFWLIQGCFWWCGTIILKFL) form a helical membrane-spanning segment. Residues 459-507 (TSKICGVSDHIRLSDLIAARILRYTDFDTLIYTCAPEFDFMEQATPLRY) lie on the Perinuclear space side of the membrane. Residues 508–528 (IKTLLLPLILVITYLIFKKIV) traverse the membrane as a helical segment. Residues 529-548 (RDIMCVLYTNTYVRKQLLDN) are Nuclear-facing. Residues 549 to 569 (AELIFHTLQLLAFTGLAILIM) form a helical membrane-spanning segment. The Perinuclear space portion of the chain corresponds to 570 to 590 (RLKLFLTPHMCIMASLICSQR). Residues 591–611 (LFGWLFCRIHFENVVFGILTM) traverse the membrane as a helical segment. Residues 612 to 773 (MSIQGCANLH…NSMYRVLKIN (162 aa)) lie on the Nuclear side of the membrane.

Belongs to the dpy-19 family. Interacts with FAM209. As to expression, predominantly expressed in testis. Present in testis but absent from epididymal sperm (at protein level).

The protein localises to the nucleus inner membrane. Probable C-mannosyltransferase that mediates C-mannosylation of tryptophan residues on target proteins. In terms of biological role, required during spermatogenesis for sperm head elongation and acrosome formation. Also plays a role in acrosome attachment to the nuclear envelope. This chain is Probable C-mannosyltransferase DPY19L2 (Dpy19l2), found in Mus musculus (Mouse).